Reading from the N-terminus, the 97-residue chain is Anti-sigma-YlaC factor YlaD (97 aa).

3 residues coordinate Zn(2+): His29, Cys33, and Cys36. The chain crosses the membrane as a helical span at residues 71-93 (YYGLLIMKAACWFGAAVAMMLII).

The protein belongs to the zinc-associated anti-sigma factor (ZAS) superfamily. Requires Zn(2+) as cofactor.

The protein resides in the cell membrane. In terms of biological role, anti-sigma factor for YlaC. This Bacillus subtilis (strain 168) protein is Anti-sigma-YlaC factor YlaD (ylaD).